A 534-amino-acid polypeptide reads, in one-letter code: Cytokinin dehydrogenase 1 (534 aa).

Positions 1–18 are cleaved as a signal peptide; the sequence is MAVVYYLLLAGLIACSHA. Residues Asn52, Asn63, and Asn89 are each glycosylated (N-linked (GlcNAc...) asparagine). Residues 65-245 form the FAD-binding PCMH-type domain; that stretch reads TSALPAAVLY…TRARIAVEPA (181 aa). 4 residues coordinate FAD: Phe100, Gly102, Arg103, and Gly104. At His105 the chain carries Pros-8alpha-FAD histidine. The FAD site is built by Ser106 and Gln110. Asn134 carries an N-linked (GlcNAc...) asparagine glycan. Positions 169, 174, 180, 184, and 235 each coordinate FAD. Asp169 is a binding site for N(6)-dimethylallyladenine. Asp169 is a binding site for trans-zeatin. 3 N-linked (GlcNAc...) asparagine glycosylation sites follow: Asn294, Asn323, and Asn338. N(6)-dimethylallyladenine is bound at residue Glu381. Residue Glu381 coordinates trans-zeatin. An N-linked (GlcNAc...) asparagine glycan is attached at Asn434. Ser456 provides a ligand contact to trans-zeatin. Positions 491, 527, and 530 each coordinate FAD.

This sequence belongs to the oxygen-dependent FAD-linked oxidoreductase family. Monomer. It depends on FAD as a cofactor. In terms of processing, glycosylated; with approximately 10 hexose residues per site. Expressed in immature kernels and unpollinated cobs. Weakly expressed in kernels harvested two weeks after anthesis.

It localises to the secreted. The protein localises to the extracellular space. The enzyme catalyses N(6)-dimethylallyladenine + A + H2O = 3-methyl-2-butenal + adenine + AH2. Its activity is regulated as follows. Competitive inhibition by phenylureas. Its function is as follows. Catalyzes the oxidation of cytokinins, a family of N(6)-substituted adenine derivatives that are plant hormones, where the substituent is an isopentenyl group. Cleaves trans-zeatin, N(6)-dimethylallyladenine (isopentenyladenine), isopentenyladenosine, zeatin riboside and cis-zeatin, but not dihydrozeatin, kinetin and benzylaminopurine. This is Cytokinin dehydrogenase 1 (CKX1) from Zea mays (Maize).